The chain runs to 64 residues: Copper-specific metallothionein-2 (64 aa).

Residues cysteine 3, cysteine 5, cysteine 9, cysteine 11, cysteine 16, cysteine 18, cysteine 22, cysteine 24, cysteine 27, cysteine 33, cysteine 40, cysteine 44, cysteine 50, cysteine 52, cysteine 56, and cysteine 58 each contribute to the Cu(+) site.

The protein belongs to the metallothionein superfamily. Type 2 family.

Functionally, the metallothioneins are involved in the cellular sequestration of toxic metal ions and regulation of essential trace elements. This isoform binds exclusively copper. The sequence is that of Copper-specific metallothionein-2 from Callinectes sapidus (Blue crab).